We begin with the raw amino-acid sequence, 399 residues long: F420-dependent formate dehydrogenase subunit beta (399 aa).

2 consecutive 4Fe-4S ferredoxin-type domains span residues 287–307 (TEYM…EACP) and 339–367 (ERML…LAKI). [4Fe-4S] cluster contacts are provided by Cys-296, Cys-299, Cys-302, Cys-306, Cys-348, Cys-351, Cys-354, and Cys-358.

The protein belongs to the FrhB family. Dimer of an alpha (FdhA) and a beta (FdhB) subunit. The cofactor is [4Fe-4S] cluster. It depends on FAD as a cofactor. Zn(2+) serves as cofactor.

It catalyses the reaction oxidized coenzyme F420-(gamma-L-Glu)(n) + formate + 2 H(+) = reduced coenzyme F420-(gamma-L-Glu)(n) + CO2. Its activity is regulated as follows. Is extremely sensitive to oxygen. Contains a FAD that is required for coenzyme F420-dependent activity but not for methyl viologen-dependent activity. Preincubation of the FAD-depleted enzyme with FAD restores coenzyme F420-dependent activity. Neither FMN nor FADH2 can replace FAD. Strongly inhibited by cyanide, azide, alpha,alpha-dipyridyl and 1,10-phenanthroline. Its function is as follows. Catalyzes the oxidation of formate to carbon dioxide, with coenzyme F420 as the electron acceptor. In vitro can also use methyl viologen, 7,8-didemethyl-8-hydroxy-5-deazariboflavin (or FO, a hydrolytic derivative of coenzyme F420), FMN and FAD as electron acceptors, but not NAD(+) or NADP(+). The chain is F420-dependent formate dehydrogenase subunit beta from Methanobacterium formicicum.